A 669-amino-acid chain; its full sequence is RNA-binding protein 14 (669 aa).

2 consecutive RRM domains span residues 1 to 73 (MKIF…MSRP) and 79 to 149 (WKIF…LSTK). Residues K126, K135, K138, K149, and K153 each participate in a glycyl lysine isopeptide (Lys-Gly) (interchain with G-Cter in SUMO2) cross-link. Disordered regions lie at residues 147–175 (STKG…DTAF) and 193–232 (NSTG…PLTA). S161 is subject to Phosphoserine. Residue K164 is modified to N6-acetyllysine; alternate. K164 participates in a covalent cross-link: Glycyl lysine isopeptide (Lys-Gly) (interchain with G-Cter in SUMO2); alternate. T206 is subject to Phosphothreonine. Phosphoserine is present on residues S220, S242, S244, S256, S272, and S280. A disordered region spans residues 284-303 (PYRGQLASPSSQSAAASSLG). The segment covering 287–303 (GQLASPSSQSAAASSLG) has biased composition (low complexity). The TRBP-interacting domain; interaction with STIL stretch occupies residues 307–354 (GAQPSASALSSYGGQAAAASSLNSYGAQGSSLASYGNQPSSYGAQAAS). S520, S523, S527, and S562 each carry phosphoserine. The segment at 566-590 (VANANSTPPPYERTRLSPPRASYDD) is disordered. At T572 the chain carries Phosphothreonine. Residue S582 is modified to Phosphoserine. K600 is covalently cross-linked (Glycyl lysine isopeptide (Lys-Gly) (interchain with G-Cter in SUMO2)). S618, S620, S623, S627, S643, and S649 each carry phosphoserine.

In terms of assembly, isoform 1: Interacts with NCOA6, CITED1 and XRCC5/KU86. Isoform 1: Interacts with SS18 isoform 1. Isoform 1: Interacts with SS18 isoform 2. Interacts with STIL and interferes with its interaction with CPAP. Interacts with gamma-tubulin. Part of the HDP-RNP complex composed of at least HEXIM1, PRKDC, XRCC5, XRCC6, paraspeckle proteins (SFPQ, NONO, PSPC1, RBM14, and MATR3) and NEAT1 RNA. Interacts with RBPMS; the interaction allows cooperative assembly of RNA-bound stable cell-specific alternative splicing regulatory complexes. In terms of tissue distribution, expressed in all tissues tested, including brain, heart, skeletal muscle, colon, thymus, spleen, kidney, liver, small intestine, placenta, lung and peripheral blood lymphocytes.

Its subcellular location is the nucleus. The protein localises to the nucleolus. It localises to the cytoplasm. Its function is as follows. Isoform 1 may function as a nuclear receptor coactivator, enhancing transcription through other coactivators such as NCOA6 and CITED1. Isoform 2, functions as a transcriptional repressor, modulating transcriptional activities of coactivators including isoform 1, NCOA6 and CITED1. Regulates centriole biogenesis by suppressing the formation of aberrant centriolar protein complexes in the cytoplasm and thus preserving mitotic spindle integrity. Prevents the formation of the STIL-CPAP complex (which can induce the formation of aberrant centriolar protein complexes) by interfering with the interaction of STIL with CPAP. Plays a role in the regulation of DNA virus-mediated innate immune response by assembling into the HDP-RNP complex, a complex that serves as a platform for IRF3 phosphorylation and subsequent innate immune response activation through the cGAS-STING pathway. Also involved in the regulation of pre-mRNA alternative splicing. The chain is RNA-binding protein 14 (RBM14) from Homo sapiens (Human).